A 188-amino-acid polypeptide reads, in one-letter code: uncharacterized protein (188 aa).

The helical transmembrane segment at 136 to 156 (TLVKLLLLFLSLMVVIVGVWW) threads the bilayer.

It localises to the host membrane. This is an uncharacterized protein from Magallana gigas (Pacific oyster).